A 184-amino-acid chain; its full sequence is Ribosome-recycling factor (184 aa).

The protein belongs to the RRF family.

The protein localises to the cytoplasm. Functionally, responsible for the release of ribosomes from messenger RNA at the termination of protein biosynthesis. May increase the efficiency of translation by recycling ribosomes from one round of translation to another. This is Ribosome-recycling factor from Lachnoclostridium phytofermentans (strain ATCC 700394 / DSM 18823 / ISDg) (Clostridium phytofermentans).